The following is a 260-amino-acid chain: BTB/POZ domain-containing protein KCTD21 (260 aa).

Residues 3–72 (DPITLNVGGK…LRTSHLDLPE (70 aa)) form the BTB domain. Residues 88–112 (QVQPLIEALQEKEVELSKAEKNAML) adopt a coiled-coil conformation.

Homopentamer. Interacts with KCTD11; KCTD21 and KCTD11 may associate in pentameric assemblies. Interacts (via BTB domain) with CUL3; indicative for a participation in a BCR (BTB-CUL3-RBX1) E3 ubiquitin-protein ligase complex. Highly expressed in cerebellum and brain. Expressed in adult cerebellum (at protein level).

Its pathway is protein modification; protein ubiquitination. In terms of biological role, probable substrate-specific adapter of a BCR (BTB-CUL3-RBX1) E3 ubiquitin-protein ligase complex mediating the ubiquitination and subsequent proteasomal degradation of target proteins. Promotes the ubiquitination of HDAC1. Can function as antagonist of the Hedgehog pathway by affecting the nuclear transfer of transcription factor GLI1; the function probably occurs via HDAC1 down-regulation, keeping GLI1 acetylated and inactive. Inhibits cell growth and tumorigenicity of medulloblastoma (MDB). The protein is BTB/POZ domain-containing protein KCTD21 (Kctd21) of Mus musculus (Mouse).